The following is a 615-amino-acid chain: MMDGFAQDWPTLTHTDNGLAMDQLGGDLPLDVGFEPQTRARSNTWPCPRPENFVEPTDELDSTKASNQQLAPGDSQQAIQNANAAKKNSSRRNAWGNLSYADLITHAIGSATDKRLTLSQIYEWMVQNVPYFKDKGDSNSSAGWKNSIRHNLSLHNRFMRVQNEGTGKSSWWMLNPEAKPGKSVRRRAASMETSRYEKRRGRAKKRVEALRQAGVVGLNDATPSPSSSVSEGLDHFPESPLHSGGGFQLSPDFRQRASSNASSCGRLSPIRAQDLEPDWGFPVDYQNTTMTQAHAQALDELTGTMADELTLCPQQQGFSAASGLPSQPPPPPYQPPQHQQAQQQQQQSPYALNGPAPGYNTLQPQSQCLLHRSLNCSCMHNARDGLSPNSVTTTMSPAYPNSEPSSDSLNTYSNVVLDGPADTAALMVQQQQQQQQMSASLEGQCLEVLNNEAQPIDEFNLENFPVGNLECNVEELLQQEMSYGGLLDINIPLATVNTNLVNSSSGPLSISNISNLSNLSNISNISNISSNSGSSLSLNQLQAQLQQQQQQQAQQQQAQQQQQAHQQHQQQLLLNNNNNSSSSLELATQTASANLNARVQYSQPSVVTSPPSWVH.

5 disordered regions span residues 39–77 (RARS…DSQQ), 182–205 (KSVR…RAKK), 217–269 (GLND…RLSP), 318–359 (FSAA…APGY), and 389–409 (NSVT…SDSL). Thr-44 is subject to Phosphothreonine; by PKB/AKT1. Positions 63-77 (TKASNQQLAPGDSQQ) are enriched in polar residues. Ser-75 carries the phosphoserine modification. The segment at residues 95–201 (WGNLSYADLI…ETSRYEKRRG (107 aa)) is a DNA-binding region (fork-head). The residue at position 190 (Ser-190) is a Phosphoserine; by PKB/AKT1. Polar residues-rich tracts occupy residues 221–230 (ATPSPSSSVS) and 256–265 (RASSNASSCG). Ser-259 is modified (phosphoserine; by PKB/AKT1). Ser-262, Ser-263, and Ser-268 each carry phosphoserine. Positions 326 to 335 (SQPPPPPYQP) are enriched in pro residues. A compositionally biased stretch (low complexity) spans 336-351 (PQHQQAQQQQQQSPYA).

In terms of assembly, interacts with melt.

Its subcellular location is the cytoplasm. It localises to the nucleus. Functionally, transcription factor involved in the regulation of the insulin signaling pathway. Consistently activates both the downstream target Thor\d4EBP and the feedback control target InR. Involved in negative regulation of the cell cycle, modulating cell growth and proliferation. In response to cellular stresses, such as nutrient deprivation or increased levels of reactive oxygen species, foxo is activated and inhibits growth through the action of target genes such as Thor. Foxo activated in the adult fat body can regulate lifespan in adults; an insulin peptide itself may function as one secondary messenger of insulin-regulated aging. Also regulates Lip4, homolog of human acid lipases, thereby acting as a key modulator of lipid metabolism by insulin signaling and integrates insulin responses to glucose and lipid homeostasis. This Drosophila erecta (Fruit fly) protein is Forkhead box protein O.